The chain runs to 366 residues: Probable cinnamyl alcohol dehydrogenase 3 (366 aa).

Cys53 serves as a coordination point for Zn(2+). Residue Ser55 participates in NADP(+) binding. 7 residues coordinate Zn(2+): His75, Glu76, Cys106, Cys109, Cys112, Cys120, and Cys169. NADP(+)-binding positions include Thr173, 194 to 199 (GLGGLG), 217 to 222 (SSSPGK), Thr257, Gly281, and 304 to 306 (SNI).

This sequence belongs to the zinc-containing alcohol dehydrogenase family. In terms of assembly, homodimer. Zn(2+) is required as a cofactor.

It carries out the reaction (E)-cinnamyl alcohol + NADP(+) = (E)-cinnamaldehyde + NADPH + H(+). The catalysed reaction is (E)-coniferol + NADP(+) = (E)-coniferaldehyde + NADPH + H(+). The enzyme catalyses (E)-sinapyl alcohol + NADP(+) = (E)-sinapaldehyde + NADPH + H(+). It catalyses the reaction (E)-4-coumaroyl alcohol + NADP(+) = (E)-4-coumaraldehyde + NADPH + H(+). It carries out the reaction (E)-caffeyl alcohol + NADP(+) = (E)-caffeyl aldehyde + NADPH + H(+). The protein operates within aromatic compound metabolism; phenylpropanoid biosynthesis. Involved in lignin biosynthesis. Catalyzes the final step specific for the production of lignin monomers. Catalyzes the NADPH-dependent reduction of coniferaldehyde, 5-hydroxyconiferaldehyde, sinapaldehyde, 4-coumaraldehyde and caffeyl aldehyde to their respective alcohols. This chain is Probable cinnamyl alcohol dehydrogenase 3, found in Oryza sativa subsp. japonica (Rice).